Reading from the N-terminus, the 557-residue chain is Eudesmanediol synthase (557 aa).

Asp310 and Asp314 together coordinate Mg(2+). Substrate-binding residues include Asp310, Asp314, Arg450, and Asn453. A DDXXD motif motif is present at residues Asp310 to Asp314. The Mg(2+) site is built by Asn453 and Ser457.

Belongs to the terpene synthase family. Monomer. Requires Mg(2+) as cofactor. The cofactor is Mn(2+). In terms of tissue distribution, specifically expressed in roots.

The protein localises to the cytoplasm. The enzyme catalyses (2E,6E)-farnesyl diphosphate + 2 H2O = 7-epi-ent-eudesmane-5,11-diol + diphosphate. It participates in secondary metabolite biosynthesis; terpenoid biosynthesis. Its function is as follows. Component of the volatile terpenes biosynthesis pathways. Dihydroxylated sesquiterpenoid synthase that generates dually hydroxylated products directly from (E,E)-farnesyl diphosphate, primarily eudesmane-2,11-diol, along with two closely related structural isomers. The protein is Eudesmanediol synthase of Zea mays (Maize).